Consider the following 262-residue polypeptide: Short-chain Z-isoprenyl diphosphate synthase (262 aa).

D40 is an active-site residue. D40 lines the Mg(2+) pocket. Substrate contacts are provided by residues 41–44, W45, and 86–88; these read GNRR and STE. Residue N89 is the Proton acceptor of the active site. Substrate contacts are provided by residues R92, R211, and 217–219; that span reads RLS. Residue E230 coordinates Mg(2+).

Belongs to the UPP synthase family. Z-FPP synthase subfamily. Mg(2+) serves as cofactor.

The enzyme catalyses isopentenyl diphosphate + (2E)-geranyl diphosphate = (2Z,6E)-farnesyl diphosphate + diphosphate. It functions in the pathway phospholipid metabolism; decaprenyl phosphate biosynthesis. Generates Z-farnesyl diphosphate (Z-FPP) from isopentenyl pyrophosphate (IPP). Z-FPP is the precursor of decaprenyl diphosphate, which has a central role in the biosynthesis of the mycobacterial cell wall. The polypeptide is Short-chain Z-isoprenyl diphosphate synthase (Mycobacterium bovis (strain ATCC BAA-935 / AF2122/97)).